A 180-amino-acid chain; its full sequence is Ribulose bisphosphate carboxylase small subunit, chloroplastic (180 aa).

The transit peptide at 1–56 directs the protein to the chloroplast; the sequence is MALISSAAVTTVNRASSAQANLVAPFTGLKSSAGFPVTKKTNNDITSIASNGGRVN.

It belongs to the RuBisCO small chain family. Heterohexadecamer of 8 large and 8 small subunits.

It is found in the plastid. Its subcellular location is the chloroplast. Its function is as follows. RuBisCO catalyzes two reactions: the carboxylation of D-ribulose 1,5-bisphosphate, the primary event in carbon dioxide fixation, as well as the oxidative fragmentation of the pentose substrate. Both reactions occur simultaneously and in competition at the same active site. Although the small subunit is not catalytic it is essential for maximal activity. The sequence is that of Ribulose bisphosphate carboxylase small subunit, chloroplastic from Medicago sativa (Alfalfa).